A 350-amino-acid polypeptide reads, in one-letter code: uncharacterized protein (350 aa).

3 disordered regions span residues 1–21, 237–266, and 278–298; these read MDSF…SSLN, NSDV…PISP, and EMST…KKRT. Composition is skewed to polar residues over residues 10 to 21 and 246 to 259; these read KPTTATSNSSLN and EDSS…TKPS. A compositionally biased stretch (basic residues) spans 287 to 298; the sequence is SRSRTPSSKKRT.

It is found in the nucleus. This is an uncharacterized protein from Schizosaccharomyces pombe (strain 972 / ATCC 24843) (Fission yeast).